The primary structure comprises 226 residues: Enolase-phosphatase E1 (226 aa).

It belongs to the HAD-like hydrolase superfamily. MasA/MtnC family. As to quaternary structure, monomer. Requires Mg(2+) as cofactor.

It carries out the reaction 5-methylsulfanyl-2,3-dioxopentyl phosphate + H2O = 1,2-dihydroxy-5-(methylsulfanyl)pent-1-en-3-one + phosphate. The protein operates within amino-acid biosynthesis; L-methionine biosynthesis via salvage pathway; L-methionine from S-methyl-5-thio-alpha-D-ribose 1-phosphate: step 3/6. It participates in amino-acid biosynthesis; L-methionine biosynthesis via salvage pathway; L-methionine from S-methyl-5-thio-alpha-D-ribose 1-phosphate: step 4/6. Bifunctional enzyme that catalyzes the enolization of 2,3-diketo-5-methylthiopentyl-1-phosphate (DK-MTP-1-P) into the intermediate 2-hydroxy-3-keto-5-methylthiopentenyl-1-phosphate (HK-MTPenyl-1-P), which is then dephosphorylated to form the acireductone 1,2-dihydroxy-3-keto-5-methylthiopentene (DHK-MTPene). This chain is Enolase-phosphatase E1, found in Alcanivorax borkumensis (strain ATCC 700651 / DSM 11573 / NCIMB 13689 / SK2).